A 222-amino-acid chain; its full sequence is 7-cyano-7-deazaguanine synthase (222 aa).

8 to 18 (LSGGMDSTTLA) contributes to the ATP binding site. Zn(2+)-binding residues include cysteine 188, cysteine 196, cysteine 199, and cysteine 202.

It belongs to the QueC family. Requires Zn(2+) as cofactor.

The catalysed reaction is 7-carboxy-7-deazaguanine + NH4(+) + ATP = 7-cyano-7-deazaguanine + ADP + phosphate + H2O + H(+). It participates in purine metabolism; 7-cyano-7-deazaguanine biosynthesis. Catalyzes the ATP-dependent conversion of 7-carboxy-7-deazaguanine (CDG) to 7-cyano-7-deazaguanine (preQ(0)). This Methanoculleus marisnigri (strain ATCC 35101 / DSM 1498 / JR1) protein is 7-cyano-7-deazaguanine synthase.